Here is a 505-residue protein sequence, read N- to C-terminus: ATP synthase subunit alpha, chloroplastic (505 aa).

Residue 170–177 coordinates ATP; sequence GDRQTGKT.

This sequence belongs to the ATPase alpha/beta chains family. In terms of assembly, F-type ATPases have 2 components, CF(1) - the catalytic core - and CF(0) - the membrane proton channel. CF(1) has five subunits: alpha(3), beta(3), gamma(1), delta(1), epsilon(1). CF(0) has four main subunits: a, b, b' and c.

It is found in the plastid. It localises to the chloroplast thylakoid membrane. It catalyses the reaction ATP + H2O + 4 H(+)(in) = ADP + phosphate + 5 H(+)(out). Produces ATP from ADP in the presence of a proton gradient across the membrane. The alpha chain is a regulatory subunit. This is ATP synthase subunit alpha, chloroplastic from Mesostigma viride (Green alga).